Reading from the N-terminus, the 321-residue chain is Glucokinase (321 aa).

8–13 contributes to the ATP binding site; the sequence is GDVGGT.

Belongs to the bacterial glucokinase family.

Its subcellular location is the cytoplasm. The enzyme catalyses D-glucose + ATP = D-glucose 6-phosphate + ADP + H(+). This is Glucokinase from Klebsiella pneumoniae subsp. pneumoniae (strain ATCC 700721 / MGH 78578).